The sequence spans 310 residues: Ribosomal protein uL3 glutamine methyltransferase (310 aa).

This sequence belongs to the protein N5-glutamine methyltransferase family. PrmB subfamily.

It catalyses the reaction L-glutaminyl-[ribosomal protein uL3] + S-adenosyl-L-methionine = N(5)-methyl-L-glutaminyl-[ribosomal protein uL3] + S-adenosyl-L-homocysteine + H(+). Its function is as follows. Specifically methylates large ribosomal subunit protein uL3 on 'Gln-150'. This Shigella dysenteriae serotype 1 (strain Sd197) protein is Ribosomal protein uL3 glutamine methyltransferase.